The sequence spans 514 residues: Variant surface glycoprotein ILTAT 1.24 (514 aa).

The N-terminal stretch at 1–23 (MVYRNILQLSVLKVLLIVLIVEA) is a signal peptide. Cystine bridges form between C37–C162 and C143–C204. An N-linked (GlcNAc...) asparagine glycan is attached at N443. The disordered stretch occupies residues 451-476 (GVPVTQTQTAGADTTAEKCKGKGEKD). A compositionally biased stretch (low complexity) spans 455-464 (TQTQTAGADT). Residues 465-476 (TAEKCKGKGEKD) show a composition bias toward basic and acidic residues. D491 carries the GPI-anchor amidated aspartate lipid modification. Positions 492–514 (SSILANKQFALSVASAAFVALLF) are cleaved as a propeptide — removed in mature form.

It is found in the cell membrane. Functionally, VSG forms a coat on the surface of the parasite. The trypanosome evades the immune response of the host by expressing a series of antigenically distinct VSGs from an estimated 1000 VSG genes. This Trypanosoma brucei brucei protein is Variant surface glycoprotein ILTAT 1.24.